Here is a 773-residue protein sequence, read N- to C-terminus: Immunoglobulin domain and leucine-rich repeat-containing protein 2 (773 aa).

An N-terminal signal peptide occupies residues 1-20 (MRKFVFFVVAILIQIHTTTS). Residues 21 to 493 (QRNRSSSPSG…DWYSYDVFNS (473 aa)) lie on the Extracellular side of the membrane. LRR repeat units follow at residues 52–73 (TRNI…KIYG), 74–96 (SNIQ…IFAP), 97–120 (FPQL…VIHP), 122–144 (LKVL…LLSI), 145–167 (FPKI…DTSN), and 168–191 (TKLK…TLRV). N-linked (GlcNAc...) asparagine glycosylation is present at Asn-114. Asn-204 carries N-linked (GlcNAc...) asparagine glycosylation. 4 LRR repeats span residues 206 to 230 (STKL…DWKF), 233 to 251 (LRSL…QLDA), 252 to 275 (PLLN…ILTP), and 296 to 319 (PSTV…FIPM). Residues 349–479 (PVYAQTSIRK…GKDYGIYHFR (131 aa)) enclose the Ig-like domain. Residues Asn-361 and Asn-379 are each glycosylated (N-linked (GlcNAc...) asparagine). A disulfide bond links Cys-396 and Cys-463. Residues 494–514 (VFWGGLATSLIVCLISFLLNI) traverse the membrane as a helical segment. Residues 515–773 (TWILTRKSAL…RSPDSPPEKR (259 aa)) are Cytoplasmic-facing. The tract at residues 725 to 773 (VRPGIIPTNAPSIRFTTKPTTSSISNEASTSSPSSSGAHRSPDSPPEKR) is disordered. Residues 733–745 (NAPSIRFTTKPTT) are compositionally biased toward polar residues. Residues 746–763 (SSISNEASTSSPSSSGAH) show a composition bias toward low complexity. A compositionally biased stretch (basic and acidic residues) spans 764 to 773 (RSPDSPPEKR).

Its subcellular location is the membrane. This Caenorhabditis elegans protein is Immunoglobulin domain and leucine-rich repeat-containing protein 2.